Here is a 165-residue protein sequence, read N- to C-terminus: Shikimate kinase (165 aa).

12 to 17 (GCGKST) is a binding site for ATP. Residue S16 coordinates Mg(2+). Residues D34, R57, and G79 each coordinate substrate. R116 provides a ligand contact to ATP. R133 is a binding site for substrate.

Belongs to the shikimate kinase family. Monomer. It depends on Mg(2+) as a cofactor.

The protein resides in the cytoplasm. It catalyses the reaction shikimate + ATP = 3-phosphoshikimate + ADP + H(+). It functions in the pathway metabolic intermediate biosynthesis; chorismate biosynthesis; chorismate from D-erythrose 4-phosphate and phosphoenolpyruvate: step 5/7. Catalyzes the specific phosphorylation of the 3-hydroxyl group of shikimic acid using ATP as a cosubstrate. The chain is Shikimate kinase from Clostridium botulinum (strain Eklund 17B / Type B).